The sequence spans 258 residues: 5-oxoprolinase subunit A (258 aa).

The protein belongs to the LamB/PxpA family. Forms a complex composed of PxpA, PxpB and PxpC.

It carries out the reaction 5-oxo-L-proline + ATP + 2 H2O = L-glutamate + ADP + phosphate + H(+). Functionally, catalyzes the cleavage of 5-oxoproline to form L-glutamate coupled to the hydrolysis of ATP to ADP and inorganic phosphate. This is 5-oxoprolinase subunit A from Corynebacterium jeikeium (strain K411).